The chain runs to 197 residues: Elongation factor Ts (197 aa).

The tract at residues 81–84 (TDFV) is involved in Mg(2+) ion dislocation from EF-Tu.

It belongs to the EF-Ts family.

The protein resides in the cytoplasm. In terms of biological role, associates with the EF-Tu.GDP complex and induces the exchange of GDP to GTP. It remains bound to the aminoacyl-tRNA.EF-Tu.GTP complex up to the GTP hydrolysis stage on the ribosome. This Coprothermobacter proteolyticus (strain ATCC 35245 / DSM 5265 / OCM 4 / BT) protein is Elongation factor Ts.